Consider the following 244-residue polypeptide: Mannose-binding protein C (244 aa).

Residues 1–18 (MSLFTSFLLLCVLTAVYA) form the signal peptide. Residues 38 to 96 (GLNGFPGKDGHDGAKGEKGEPGQGLRGLQGPPGKVGPAGPPGNPGSKGATGPKGDRGES) enclose the Collagen-like domain. P43 bears the 4-hydroxyproline mark. Residues 43–99 (PGKDGHDGAKGEKGEPGQGLRGLQGPPGKVGPAGPPGNPGSKGATGPKGDRGESVEF) are disordered. Positions 45 to 57 (KDGHDGAKGEKGE) are enriched in basic and acidic residues. 4-hydroxyproline is present on residues P58, P69, P78, and P81. The segment covering 65 to 74 (LQGPPGKVGP) has biased composition (low complexity). The stretch at 108 to 126 (IAALRSELRAMRKWVLLSM) forms a coiled coil. The C-type lectin domain occupies 129–241 (NVGKKYFMSS…CSDSFLVVCE (113 aa)). Cystine bridges form between C151–C240 and C218–C232.

In terms of assembly, oligomeric complex of 3 or more homotrimers. Interacts with MASP1 and MASP2. Interacts with MEP1A and MEP1B and may inhibit their catalytic activity.

It localises to the secreted. Its function is as follows. Calcium-dependent lectin involved in innate immune defense. Binds mannose, fucose and N-acetylglucosamine on different microorganisms and activates the lectin complement pathway. Binds to late apoptotic cells, as well as to apoptotic blebs and to necrotic cells, but not to early apoptotic cells, facilitating their uptake by macrophages. The protein is Mannose-binding protein C (Mbl2) of Rattus norvegicus (Rat).